The sequence spans 341 residues: S-adenosylmethionine:tRNA ribosyltransferase-isomerase (341 aa).

The protein belongs to the QueA family. As to quaternary structure, monomer.

The protein localises to the cytoplasm. The enzyme catalyses 7-aminomethyl-7-carbaguanosine(34) in tRNA + S-adenosyl-L-methionine = epoxyqueuosine(34) in tRNA + adenine + L-methionine + 2 H(+). It functions in the pathway tRNA modification; tRNA-queuosine biosynthesis. Its function is as follows. Transfers and isomerizes the ribose moiety from AdoMet to the 7-aminomethyl group of 7-deazaguanine (preQ1-tRNA) to give epoxyqueuosine (oQ-tRNA). The chain is S-adenosylmethionine:tRNA ribosyltransferase-isomerase from Clostridium botulinum (strain Okra / Type B1).